Reading from the N-terminus, the 104-residue chain is Synaptic plasticity regulator PANTS (104 aa).

The segment at 58–104 is disordered; the sequence is RRSAEAQADSLPPGPEGEPRVAGAGPNAVTGILTRNQGTERPHGDTR. A compositionally biased stretch (basic and acidic residues) spans 95–104; the sequence is GTERPHGDTR.

The protein belongs to the UPF0545 family. In terms of assembly, interacts with RTN4 isoform A/Nogo-A; the interaction results in enhanced RTN4-mediated inhibition of AMPA receptor clustering. Also interacts with NCAM1, RANBP2 and CCT8. In terms of processing, rapidly degraded by proteolysis following neuronal stimulation, resulting in increased AMPA receptor clustering.

It localises to the synapse. It is found in the synaptic cleft. Functionally, negatively regulates long-term potentiation and modulates adult synaptic plasticity. Stabilizes the interaction of RTN4 isoform A/Nogo-A with its receptors, inhibiting clustering of postsynaptic AMPA receptors at synaptic sites. Upon neuronal stimulation, degraded at synapses, reducing RTN4 signaling and allowing AMPA receptor clustering at individual synapses. This chain is Synaptic plasticity regulator PANTS, found in Bos taurus (Bovine).